The following is a 295-amino-acid chain: Mycothiol acetyltransferase (295 aa).

N-acetyltransferase domains are found at residues 5–141 (VEIR…TPLP) and 149–295 (VRLR…MYRR). Residue Glu35 participates in 1D-myo-inositol 2-(L-cysteinylamino)-2-deoxy-alpha-D-glucopyranoside binding. Acetyl-CoA is bound at residue 76-78 (LVV). 1D-myo-inositol 2-(L-cysteinylamino)-2-deoxy-alpha-D-glucopyranoside contacts are provided by Glu176, Lys215, and Glu229. Residues 233–235 (VGV) and 240–246 (RGTGLGR) each bind acetyl-CoA. Tyr267 contacts 1D-myo-inositol 2-(L-cysteinylamino)-2-deoxy-alpha-D-glucopyranoside. 272-277 (NTAAVR) is an acetyl-CoA binding site.

The protein belongs to the acetyltransferase family. MshD subfamily. In terms of assembly, monomer.

It catalyses the reaction 1D-myo-inositol 2-(L-cysteinylamino)-2-deoxy-alpha-D-glucopyranoside + acetyl-CoA = mycothiol + CoA + H(+). Catalyzes the transfer of acetyl from acetyl-CoA to desacetylmycothiol (Cys-GlcN-Ins) to form mycothiol. The sequence is that of Mycothiol acetyltransferase from Thermobispora bispora (strain ATCC 19993 / DSM 43833 / CBS 139.67 / JCM 10125 / KCTC 9307 / NBRC 14880 / R51).